A 411-amino-acid polypeptide reads, in one-letter code: Alpha-galactosidase (411 aa).

The N-terminal stretch at 1–24 (MATHYSIIGGMIIVVLLMIIGSEG) is a signal peptide. Positions 25–47 (GRLLEKKNRTSAEAEHYNVRRYL) are excised as a propeptide. Asn32 is a glycosylation site (N-linked (GlcNAc...) asparagine). Cys68 and Cys100 form a disulfide bridge. Asn145 carries an N-linked (GlcNAc...) asparagine glycan. Cysteines 148 and 179 form a disulfide. Asp177 acts as the Nucleophile in catalysis. 210 to 214 (EWGWE) contributes to the substrate binding site. Asp232 functions as the Proton donor in the catalytic mechanism. Asn352 is a glycosylation site (N-linked (GlcNAc...) asparagine).

Belongs to the glycosyl hydrolase 27 family.

The enzyme catalyses Hydrolysis of terminal, non-reducing alpha-D-galactose residues in alpha-D-galactosides, including galactose oligosaccharides, galactomannans and galactolipids.. Its function is as follows. Involved in the hydrolysis of the galactomannan, it splits alpha-linked galactose moieties. It is particularly suitable for the hydrolysis of guar gum to a gum with improved gelling properties. Preferentially cleaves alpha-1,6 glycoside linkages. In Cyamopsis tetragonoloba (Guar), this protein is Alpha-galactosidase.